The chain runs to 194 residues: Large ribosomal subunit protein bL25 (194 aa).

Belongs to the bacterial ribosomal protein bL25 family. CTC subfamily. Part of the 50S ribosomal subunit; part of the 5S rRNA/L5/L18/L25 subcomplex. Contacts the 5S rRNA. Binds to the 5S rRNA independently of L5 and L18.

In terms of biological role, this is one of the proteins that binds to the 5S RNA in the ribosome where it forms part of the central protuberance. This chain is Large ribosomal subunit protein bL25, found in Geotalea uraniireducens (strain Rf4) (Geobacter uraniireducens).